A 467-amino-acid polypeptide reads, in one-letter code: Ribulose bisphosphate carboxylase large chain (467 aa).

A propeptide spanning residues 1–2 (MS) is cleaved from the precursor. Pro3 carries the post-translational modification N-acetylproline. N6,N6,N6-trimethyllysine is present on Lys14. Asn123 and Thr173 together coordinate substrate. Lys175 serves as the catalytic Proton acceptor. Lys177 contacts substrate. Mg(2+) is bound by residues Lys201, Asp203, and Glu204. Lys201 bears the N6-carboxylysine mark. The active-site Proton acceptor is the His294. The substrate site is built by Arg295, His327, and Ser379.

The protein belongs to the RuBisCO large chain family. Type I subfamily. As to quaternary structure, heterohexadecamer of 8 large chains and 8 small chains; disulfide-linked. The disulfide link is formed within the large subunit homodimers. The cofactor is Mg(2+). Post-translationally, the disulfide bond which can form in the large chain dimeric partners within the hexadecamer appears to be associated with oxidative stress and protein turnover.

Its subcellular location is the plastid. The protein resides in the chloroplast. It carries out the reaction 2 (2R)-3-phosphoglycerate + 2 H(+) = D-ribulose 1,5-bisphosphate + CO2 + H2O. The enzyme catalyses D-ribulose 1,5-bisphosphate + O2 = 2-phosphoglycolate + (2R)-3-phosphoglycerate + 2 H(+). Its function is as follows. RuBisCO catalyzes two reactions: the carboxylation of D-ribulose 1,5-bisphosphate, the primary event in carbon dioxide fixation, as well as the oxidative fragmentation of the pentose substrate in the photorespiration process. Both reactions occur simultaneously and in competition at the same active site. The polypeptide is Ribulose bisphosphate carboxylase large chain (Calamus usitatus (Palm tree)).